A 132-amino-acid polypeptide reads, in one-letter code: Small ribosomal subunit protein uS13 (132 aa).

Basic residues predominate over residues 101–125 (RGLPVRGQRTKTNARTRKGPRKTVA). The interval 101–132 (RGLPVRGQRTKTNARTRKGPRKTVANKKIETR) is disordered.

This sequence belongs to the universal ribosomal protein uS13 family. Part of the 30S ribosomal subunit. Forms a loose heterodimer with protein S19. Forms two bridges to the 50S subunit in the 70S ribosome.

Located at the top of the head of the 30S subunit, it contacts several helices of the 16S rRNA. In the 70S ribosome it contacts the 23S rRNA (bridge B1a) and protein L5 of the 50S subunit (bridge B1b), connecting the 2 subunits; these bridges are implicated in subunit movement. Contacts the tRNAs in the A and P-sites. This Ureaplasma urealyticum serovar 10 (strain ATCC 33699 / Western) protein is Small ribosomal subunit protein uS13.